The primary structure comprises 124 residues: Small ribosomal subunit protein uS12 (124 aa).

Residue aspartate 89 is modified to 3-methylthioaspartic acid.

It belongs to the universal ribosomal protein uS12 family. As to quaternary structure, part of the 30S ribosomal subunit. Contacts proteins S8 and S17. May interact with IF1 in the 30S initiation complex.

With S4 and S5 plays an important role in translational accuracy. Its function is as follows. Interacts with and stabilizes bases of the 16S rRNA that are involved in tRNA selection in the A site and with the mRNA backbone. Located at the interface of the 30S and 50S subunits, it traverses the body of the 30S subunit contacting proteins on the other side and probably holding the rRNA structure together. The combined cluster of proteins S8, S12 and S17 appears to hold together the shoulder and platform of the 30S subunit. In Koribacter versatilis (strain Ellin345), this protein is Small ribosomal subunit protein uS12.